The chain runs to 520 residues: Cholesterol side-chain cleavage enzyme, mitochondrial (520 aa).

The N-terminal 36 residues, 1–36, are a transit peptide targeting the mitochondrion; it reads MLAKGLSLRSVLAKGCQPFLSPTWQSSVLATGGGAN. Cys-458 lines the heme pocket.

Belongs to the cytochrome P450 family. In terms of assembly, interacts with FDX1/adrenodoxin. Heme is required as a cofactor.

Its subcellular location is the mitochondrion inner membrane. It carries out the reaction 6 reduced [adrenodoxin] + cholesterol + 3 O2 + 6 H(+) = 4-methylpentanal + pregnenolone + 6 oxidized [adrenodoxin] + 4 H2O. It catalyses the reaction 2 reduced [adrenodoxin] + cholesterol + O2 + 2 H(+) = (22R)-hydroxycholesterol + 2 oxidized [adrenodoxin] + H2O. The enzyme catalyses (22R)-hydroxycholesterol + 2 reduced [adrenodoxin] + O2 + 2 H(+) = (20R,22R)-20,22-dihydroxycholesterol + 2 oxidized [adrenodoxin] + H2O. The catalysed reaction is (20R,22R)-20,22-dihydroxycholesterol + 2 reduced [adrenodoxin] + O2 + 2 H(+) = 4-methylpentanal + pregnenolone + 2 oxidized [adrenodoxin] + 2 H2O. It participates in lipid metabolism; C21-steroid hormone metabolism. It functions in the pathway steroid metabolism; cholesterol metabolism. Functionally, a cytochrome P450 monooxygenase that catalyzes the side-chain hydroxylation and cleavage of cholesterol to pregnenolone, the precursor of most steroid hormones. Catalyzes three sequential oxidation reactions of cholesterol, namely the hydroxylation at C22 followed with the hydroxylation at C20 to yield 20R,22R-hydroxycholesterol that is further cleaved between C20 and C22 to yield the C21-steroid pregnenolone and 4-methylpentanal. Mechanistically, uses molecular oxygen inserting one oxygen atom into a substrate and reducing the second into a water molecule. Two electrons are provided by NADPH via a two-protein mitochondrial transfer system comprising flavoprotein FDXR (adrenodoxin/ferredoxin reductase) and nonheme iron-sulfur protein FDX1 or FDX2 (adrenodoxin/ferredoxin). This is Cholesterol side-chain cleavage enzyme, mitochondrial (CYP11A1) from Mesocricetus auratus (Golden hamster).